We begin with the raw amino-acid sequence, 291 residues long: Acetyl-coenzyme A carboxylase carboxyl transferase subunit beta (291 aa).

One can recognise a CoA carboxyltransferase N-terminal domain in the interval 36–291 (MWVKCDGCGK…KILVIHGRGN (256 aa)). The Zn(2+) site is built by cysteine 40, cysteine 43, cysteine 59, and cysteine 62. The C4-type zinc-finger motif lies at 40–62 (CDGCGKVLYKNDMEKNNKVCYHC).

This sequence belongs to the AccD/PCCB family. In terms of assembly, acetyl-CoA carboxylase is a heterohexamer composed of biotin carboxyl carrier protein (AccB), biotin carboxylase (AccC) and two subunits each of ACCase subunit alpha (AccA) and ACCase subunit beta (AccD). Requires Zn(2+) as cofactor.

It localises to the cytoplasm. It catalyses the reaction N(6)-carboxybiotinyl-L-lysyl-[protein] + acetyl-CoA = N(6)-biotinyl-L-lysyl-[protein] + malonyl-CoA. The protein operates within lipid metabolism; malonyl-CoA biosynthesis; malonyl-CoA from acetyl-CoA: step 1/1. In terms of biological role, component of the acetyl coenzyme A carboxylase (ACC) complex. Biotin carboxylase (BC) catalyzes the carboxylation of biotin on its carrier protein (BCCP) and then the CO(2) group is transferred by the transcarboxylase to acetyl-CoA to form malonyl-CoA. This Clostridium kluyveri (strain NBRC 12016) protein is Acetyl-coenzyme A carboxylase carboxyl transferase subunit beta.